The sequence spans 257 residues: Very long chain fatty acid elongase F (257 aa).

7 consecutive transmembrane segments (helical) span residues 10–30 (IPVVSNPWITMGTLIGYLLFV), 55–75 (IFQILYNGLILVLGVHFLFVL), 98–118 (LICTLYLVNKFVDLVETIFFV), 135–155 (FAMAFFGYLYYCFHGYGGVAF), 158–178 (CLLNTAVHVIMYAYYYLSSIS), 191–211 (ITIAQLVQFAIILLHCTITLA), and 221–241 (LTYGCGSLSAFFAVIFSQFYY).

It belongs to the ELO family. As to expression, highly expressed in females. Little or no expression detected in males.

It localises to the endoplasmic reticulum membrane. It carries out the reaction a very-long-chain acyl-CoA + malonyl-CoA + H(+) = a very-long-chain 3-oxoacyl-CoA + CO2 + CoA. It functions in the pathway lipid metabolism; fatty acid biosynthesis. Condensing enzyme that elongates saturated and monounsaturated very long chain fatty acids, to yield products up to 30 carbons in length. May also elongate diunsaturated fatty acids. Important for courtship behavior where it probably has a role in female pheromone biosynthesis. The sequence is that of Very long chain fatty acid elongase F from Drosophila melanogaster (Fruit fly).